Reading from the N-terminus, the 360-residue chain is DNA replication and repair protein RecF (360 aa).

Residue 30–37 (GQNGSGKT) coordinates ATP.

This sequence belongs to the RecF family.

It localises to the cytoplasm. Its function is as follows. The RecF protein is involved in DNA metabolism; it is required for DNA replication and normal SOS inducibility. RecF binds preferentially to single-stranded, linear DNA. It also seems to bind ATP. This Shewanella baltica (strain OS185) protein is DNA replication and repair protein RecF.